The primary structure comprises 51 residues: Protein Tat (51 aa).

The segment covering 1–25 (EAETATKSCSGRQANQVSLPKQPAS) has biased composition (polar residues). The disordered stretch occupies residues 1 to 51 (EAETATKSCSGRQANQVSLPKQPASQPRGDPTGPKESKKKVETETETDPVN). Residue K21 forms a Glycyl lysine isopeptide (Lys-Gly) (interchain with G-Cter in ubiquitin) linkage. The Cell attachment site signature appears at 28-30 (RGD). Residues 33 to 43 (GPKESKKKVET) show a composition bias toward basic and acidic residues.

The protein belongs to the lentiviruses Tat family. In terms of assembly, interacts with host CCNT1. Associates with the P-TEFb complex composed at least of Tat, P-TEFb (CDK9 and CCNT1), TAR RNA, RNA Pol II. Recruits the HATs CREBBP, TAF1/TFIID, EP300, PCAF and GCN5L2. Interacts with host KAT5/Tip60; this interaction targets the latter to degradation. Interacts with the host deacetylase SIRT1. Interacts with host capping enzyme RNGTT; this interaction stimulates RNGTT. Binds to host KDR, and to the host integrins ITGAV/ITGB3 and ITGA5/ITGB1. Interacts with host KPNB1/importin beta-1 without previous binding to KPNA1/importin alpha-1. Interacts with EIF2AK2. Interacts with host nucleosome assembly protein NAP1L1; this interaction may be required for the transport of Tat within the nucleus, since the two proteins interact at the nuclear rim. Interacts with host C1QBP/SF2P32; this interaction involves lysine-acetylated Tat. Interacts with the host chemokine receptors CCR2, CCR3 and CXCR4. Interacts with host DPP4/CD26; this interaction may trigger an anti-proliferative effect. Interacts with host LDLR. Interacts with the host extracellular matrix metalloproteinase MMP1. Interacts with host PRMT6; this interaction mediates Tat's methylation. Interacts with, and is ubiquitinated by MDM2/Hdm2. Interacts with host PSMC3 and HTATIP2. Interacts with STAB1; this interaction may overcome SATB1-mediated repression of IL2 and IL2RA (interleukin) in T cells by binding to the same domain than HDAC1. Interacts (when acetylated) with human CDK13, thereby increasing HIV-1 mRNA splicing and promoting the production of the doubly spliced HIV-1 protein Nef. In terms of processing, acetylation by EP300, CREBBP, GCN5L2/GCN5 and PCAF regulates the transactivation activity of Tat. Post-translationally, phosphorylated by EIF2AK2 on serine and threonine residues adjacent to the basic region important for TAR RNA binding and function. Phosphorylation of Tat by EIF2AK2 is dependent on the prior activation of EIF2AK2 by dsRNA. Asymmetrical arginine methylation by host PRMT6 seems to diminish the transactivation capacity of Tat and affects the interaction with host CCNT1. In terms of processing, polyubiquitination by MDM2 does not target Tat to degradation, but activates its transactivation function and fosters interaction with CCNT1 and TAR RNA.

Its subcellular location is the host nucleus. The protein resides in the host nucleolus. The protein localises to the host cytoplasm. It localises to the secreted. Transcriptional activator that increases RNA Pol II processivity, thereby increasing the level of full-length viral transcripts. Recognizes a hairpin structure at the 5'-LTR of the nascent viral mRNAs referred to as the transactivation responsive RNA element (TAR) and recruits the cyclin T1-CDK9 complex (P-TEFb complex) that will in turn hyperphosphorylate the RNA polymerase II to allow efficient elongation. The CDK9 component of P-TEFb and other Tat-activated kinases hyperphosphorylate the C-terminus of RNA Pol II that becomes stabilized and much more processive. Other factors such as HTATSF1/Tat-SF1, SUPT5H/SPT5, and HTATIP2 are also important for Tat's function. Besides its effect on RNA Pol II processivity, Tat induces chromatin remodeling of proviral genes by recruiting the histone acetyltransferases (HATs) CREBBP, EP300 and PCAF to the chromatin. This also contributes to the increase in proviral transcription rate, especially when the provirus integrates in transcriptionally silent region of the host genome. To ensure maximal activation of the LTR, Tat mediates nuclear translocation of NF-kappa-B by interacting with host RELA. Through its interaction with host TBP, Tat may also modulate transcription initiation. Tat can reactivate a latently infected cell by penetrating in it and transactivating its LTR promoter. In the cytoplasm, Tat is thought to act as a translational activator of HIV-1 mRNAs. Its function is as follows. Extracellular circulating Tat can be endocytosed by surrounding uninfected cells via the binding to several surface receptors such as CD26, CXCR4, heparan sulfate proteoglycans (HSPG) or LDLR. Neurons are rarely infected, but they internalize Tat via their LDLR. Endosomal low pH allows Tat to cross the endosome membrane to enter the cytosol and eventually further translocate into the nucleus, thereby inducing severe cell dysfunctions ranging from cell activation to cell death. Through its interaction with nuclear HATs, Tat is potentially able to control the acetylation-dependent cellular gene expression. Tat seems to inhibit the HAT activity of KAT5/Tip60 and TAF1, and consequently modify the expression of specific cellular genes. Modulates the expression of many cellular genes involved in cell survival, proliferation or in coding for cytokines (such as IL10) or cytokine receptors. May be involved in the derepression of host interleukin IL2 expression. Mediates the activation of cyclin-dependent kinases and dysregulation of microtubule network. Tat plays a role in T-cell and neurons apoptosis. Tat induced neurotoxicity and apoptosis probably contribute to neuroAIDS. Host extracellular matrix metalloproteinase MMP1 cleaves Tat and decreases Tat's mediated neurotoxicity. Circulating Tat also acts as a chemokine-like and/or growth factor-like molecule that binds to specific receptors on the surface of the cells, affecting many cellular pathways. In the vascular system, Tat binds to ITGAV/ITGB3 and ITGA5/ITGB1 integrins dimers at the surface of endothelial cells and competes with bFGF for heparin-binding sites, leading to an excess of soluble bFGF. Binds to KDR/VEGFR-2. All these Tat-mediated effects enhance angiogenesis in Kaposi's sarcoma lesions. The protein is Protein Tat of Homo sapiens (Human).